The sequence spans 20 residues: Hemocyanin subunit Ib (20 aa).

The segment at 1-20 (DSVGSTTAHKQQNINHLLDK) is disordered.

It belongs to the tyrosinase family. Hemocyanin subfamily. In terms of assembly, composed of 3 major subunits (IB, II and III) and 1 minor subunit (IA) which form homohexamers and heterohexamers. May also form larger structures. Hemolymph.

The protein resides in the secreted. It localises to the extracellular space. Its function is as follows. Hemocyanins are copper-containing oxygen carriers occurring freely dissolved in the hemolymph of many mollusks and arthropods. This chain is Hemocyanin subunit Ib, found in Panulirus japonicus (Japanese spiny lobster).